Here is a 631-residue protein sequence, read N- to C-terminus: Probable methyltransferase PMT16 (631 aa).

At 1-14 (MNLFTRISSRTKKA) the chain is on the cytoplasmic side. The helical; Signal-anchor for type II membrane protein transmembrane segment at 15-35 (NLYYVTLVALLCIASYLLGIW) threads the bilayer. Residues 36–631 (QNTAVNPRAA…EDKNNTSALS (596 aa)) are Lumenal-facing. 3 N-linked (GlcNAc...) asparagine glycosylation sites follow: Asn-61, Asn-230, and Asn-626.

It belongs to the methyltransferase superfamily.

The protein localises to the endoplasmic reticulum membrane. The chain is Probable methyltransferase PMT16 from Arabidopsis thaliana (Mouse-ear cress).